The following is a 285-amino-acid chain: Inositol oxygenase (285 aa).

Substrate is bound at residue Arg29. A Phosphoserine modification is found at Ser33. 85–87 (DES) contacts substrate. 3 residues coordinate Fe cation: His98, His123, and Asp124. Residues Lys127 and 141–142 (GD) each bind substrate. Fe cation contacts are provided by His194, His220, and Asp253. 220 to 221 (HS) provides a ligand contact to substrate.

Belongs to the myo-inositol oxygenase family. Fe cation serves as cofactor. In terms of tissue distribution, kidney specific.

It localises to the cytoplasm. It carries out the reaction myo-inositol + O2 = D-glucuronate + H2O + H(+). Its pathway is polyol metabolism; myo-inositol degradation into D-glucuronate; D-glucuronate from myo-inositol: step 1/1. The protein is Inositol oxygenase (MIOX) of Homo sapiens (Human).